The chain runs to 212 residues: Nucleoside triphosphate pyrophosphatase (212 aa).

Asp79 (proton acceptor) is an active-site residue.

This sequence belongs to the Maf family. A divalent metal cation serves as cofactor.

The protein resides in the cytoplasm. It carries out the reaction a ribonucleoside 5'-triphosphate + H2O = a ribonucleoside 5'-phosphate + diphosphate + H(+). It catalyses the reaction a 2'-deoxyribonucleoside 5'-triphosphate + H2O = a 2'-deoxyribonucleoside 5'-phosphate + diphosphate + H(+). Functionally, nucleoside triphosphate pyrophosphatase. May have a dual role in cell division arrest and in preventing the incorporation of modified nucleotides into cellular nucleic acids. The polypeptide is Nucleoside triphosphate pyrophosphatase (Nocardia farcinica (strain IFM 10152)).